The primary structure comprises 340 residues: Putative pyridoxal kinase C18.10 (340 aa).

The substrate site is built by Ser19 and Tyr130. ATP contacts are provided by residues Thr189 to Ser190 and Gln218 to Gly230. Asp231 provides a ligand contact to substrate.

It belongs to the pyridoxine kinase family. A divalent metal cation serves as cofactor.

Its subcellular location is the cytoplasm. It localises to the nucleus. The catalysed reaction is pyridoxal + ATP = pyridoxal 5'-phosphate + ADP + H(+). Functionally, required for synthesis of pyridoxal-5-phosphate from vitamin B6. This Schizosaccharomyces pombe (strain 972 / ATCC 24843) (Fission yeast) protein is Putative pyridoxal kinase C18.10.